The primary structure comprises 371 residues: Cytochrome b (371 aa).

A run of 4 helical transmembrane segments spans residues 25-45 (FGSM…FLAI), 69-90 (WIMQ…YIHI), 105-125 (WLSG…GYVL), and 170-190 (FFAL…IHIM). Heme b contacts are provided by H75 and H89. The heme b site is built by H174 and H188. H193 serves as a coordination point for a ubiquinone. The next 4 helical transmembrane spans lie at 218 to 238 (HKDI…MSFS), 280 to 300 (LGGT…PFTH), 312 to 332 (IMQL…WAAT), and 339 to 358 (FTII…IMNP).

Belongs to the cytochrome b family. In terms of assembly, the cytochrome bc1 complex contains 3 respiratory subunits (MT-CYB, CYC1 and UQCRFS1), 2 core proteins (UQCRC1 and UQCRC2) and probably 6 low-molecular weight proteins. Heme b serves as cofactor.

The protein resides in the mitochondrion inner membrane. Functionally, component of the ubiquinol-cytochrome c reductase complex (complex III or cytochrome b-c1 complex) that is part of the mitochondrial respiratory chain. The b-c1 complex mediates electron transfer from ubiquinol to cytochrome c. Contributes to the generation of a proton gradient across the mitochondrial membrane that is then used for ATP synthesis. The chain is Cytochrome b (MT-CYB) from Coluber constrictor (Eastern racer).